The following is a 428-amino-acid chain: Immunoglobulin superfamily containing leucine-rich repeat protein (428 aa).

The signal sequence occupies residues 1 to 18 (MRALCLLCWAVLLNLVRA). An LRRNT domain is found at 19–50 (CPEPCDCGEKYGFQIADCAYRDLEGVPPGFPA). Asn-51 carries an N-linked (GlcNAc...) asparagine glycan. 5 LRR repeats span residues 51-72 (NVTT…AFRE), 75-98 (LLQS…APLS), 99-122 (HLKS…HNLS), 123-144 (ALQL…AFSS), and 147-168 (ALRS…TFAP). In terms of domain architecture, LRRCT spans 180-231 (NPFDCTCGIVWFKTWALASAVSIPEQDNIACTTPHVLKGIPLGRLPPLPCSA). In terms of domain architecture, Ig-like spans 232-343 (PSVQLSYQPS…GSAESSVNVA (112 aa)). The cysteines at positions 257 and 327 are disulfide-linked. Residue Asn-309 is glycosylated (N-linked (GlcNAc...) asparagine).

Detected in thyroid, heart, retina and spinal cord.

It localises to the secreted. This Mus musculus (Mouse) protein is Immunoglobulin superfamily containing leucine-rich repeat protein (Islr).